A 214-amino-acid chain; its full sequence is MDKTVADLRKDYTLEGLSELEVDLNPFIQFKKWFDQALAGQLPEPNAMTLATVTPDGKPSARMVLLKDFDERGFAFFTNYNSRKGQELAENPLAALVFWWAELERQVRICGYVEKVSETESDQYFDTRPPNSRLGAWVSNQSEVIESREVLERRMQEFYSKYENQEIPRPPHWGGLRVIPTEIEFWQGRSSRLHDRLLYSRLDNGTWKIDRLSP.

Substrate-binding positions include 9–12 and lysine 67; that span reads RKDY. Residues 62 to 67, 77 to 78, arginine 83, lysine 84, and glutamine 106 each bind FMN; these read RMVLLK and FT. Substrate-binding residues include tyrosine 124, arginine 128, and serine 132. FMN is bound by residues 141–142 and tryptophan 186; that span reads QS. 192 to 194 is a substrate binding site; it reads RLH. Arginine 196 is a binding site for FMN.

Belongs to the pyridoxamine 5'-phosphate oxidase family. In terms of assembly, homodimer. Requires FMN as cofactor.

It catalyses the reaction pyridoxamine 5'-phosphate + O2 + H2O = pyridoxal 5'-phosphate + H2O2 + NH4(+). The enzyme catalyses pyridoxine 5'-phosphate + O2 = pyridoxal 5'-phosphate + H2O2. It functions in the pathway cofactor metabolism; pyridoxal 5'-phosphate salvage; pyridoxal 5'-phosphate from pyridoxamine 5'-phosphate: step 1/1. The protein operates within cofactor metabolism; pyridoxal 5'-phosphate salvage; pyridoxal 5'-phosphate from pyridoxine 5'-phosphate: step 1/1. In terms of biological role, catalyzes the oxidation of either pyridoxine 5'-phosphate (PNP) or pyridoxamine 5'-phosphate (PMP) into pyridoxal 5'-phosphate (PLP). The chain is Pyridoxine/pyridoxamine 5'-phosphate oxidase from Nostoc punctiforme (strain ATCC 29133 / PCC 73102).